A 430-amino-acid chain; its full sequence is Serine hydroxymethyltransferase (430 aa).

120–122 (GHI) lines the (6S)-5,6,7,8-tetrahydrofolate pocket. K226 bears the N6-(pyridoxal phosphate)lysine mark.

It belongs to the SHMT family. Homodimer. Pyridoxal 5'-phosphate serves as cofactor.

It localises to the cytoplasm. It functions in the pathway amino-acid biosynthesis; glycine biosynthesis; glycine from L-serine: step 1/1. In terms of biological role, catalyzes the reversible interconversion of serine and glycine with a modified folate serving as the one-carbon carrier. Also exhibits a pteridine-independent aldolase activity toward beta-hydroxyamino acids, producing glycine and aldehydes, via a retro-aldol mechanism. The polypeptide is Serine hydroxymethyltransferase (Pyrobaculum islandicum (strain DSM 4184 / JCM 9189 / GEO3)).